A 598-amino-acid polypeptide reads, in one-letter code: Biotin-dependent acyl-coenzyme A carboxylase alpha3 subunit (598 aa).

In terms of domain architecture, Biotin carboxylation spans Arg-8 to Glu-452. The region spanning Arg-127 to Asn-324 is the ATP-grasp domain. Ala-155–Val-216 contributes to the ATP binding site. 3 residues coordinate Mg(2+): Glu-282, Glu-295, and Asn-297. Mn(2+) is bound by residues Glu-282, Glu-295, and Asn-297. Residues Pro-506–Ala-531 are disordered. The span at Ile-510 to Gly-521 shows a compositional bias: basic residues. The region spanning His-522–Lys-598 is the Biotinyl-binding domain. Position 564 is an N6-biotinyllysine (Lys-564).

In terms of assembly, the biotin-dependent acyl-CoA carboxylase complex is composed of AccA3, which contains the biotin carboxylase (BC) and biotin carboxyl carrier protein (BCCP) domains, and an AccD protein, which contains the carboxyl transferase (CT) domain. Requires Mg(2+) as cofactor. The cofactor is Mn(2+). It depends on biotin as a cofactor.

It carries out the reaction N(6)-biotinyl-L-lysyl-[protein] + hydrogencarbonate + ATP = N(6)-carboxybiotinyl-L-lysyl-[protein] + ADP + phosphate + H(+). Its pathway is lipid metabolism; fatty acid biosynthesis. It participates in lipid metabolism; mycolic acid biosynthesis. Component of a biotin-dependent acyl-CoA carboxylase complex. This subunit catalyzes the ATP-dependent carboxylation of the biotin carried by the biotin carboxyl carrier (BCC) domain, resulting in the formation of carboxyl biotin. The polypeptide is Biotin-dependent acyl-coenzyme A carboxylase alpha3 subunit (bccA) (Mycobacterium leprae (strain TN)).